Here is a 545-residue protein sequence, read N- to C-terminus: MTILTQSTTWQALSAHSQDIPHMRELFAADPARFTKMSLSSCGLFLDYSKNRATPETLNLLFALAQEAKLDAKIKAMFAGDIINTTEKRAVLHTALRNTAEQCIIAEGQDIVPEVQQTLNKMQQFVTSVTSGQWKGYTGKAITDIVSIGIGGSFLGPKIVSQALRPYWITGLNCHFVANVDGTSISEKLKLLDPETTLFIMSSKSFGTQETLTNTLTAKAWFLAKGGSQSDVAKHFAAVTSNVVKATGFGIDANNIFPMWDWVGGRYSLWSAIGLPIALLIGMDNFRALLKGAHQMDTHFANAPLTENMPVIMGLLSLWYGNFFNAQSHVVLTYDHYLRGLPAYFQQLDMESNGKSVTLNGTHVDYSTGPVIWGGEGTNGQHAYHQLLHQGTALIPADFIMPLQSHNPIGEHHDQLASNCFGQTQALMQGRTLDEALAELSKSALSNEEKLLIAKHKVMSGNKPSNTLLMDKLTPETLGALIALYEHRTFVQGAIWDINSFDQWGVELGKTLGNDVLTRIGADQEATVLDASSNGLINLYRRGKI.

The Proton donor role is filled by glutamate 351. Residues histidine 382 and lysine 510 contribute to the active site.

This sequence belongs to the GPI family.

It localises to the cytoplasm. The enzyme catalyses alpha-D-glucose 6-phosphate = beta-D-fructose 6-phosphate. It functions in the pathway carbohydrate biosynthesis; gluconeogenesis. It participates in carbohydrate degradation; glycolysis; D-glyceraldehyde 3-phosphate and glycerone phosphate from D-glucose: step 2/4. In terms of biological role, catalyzes the reversible isomerization of glucose-6-phosphate to fructose-6-phosphate. The chain is Glucose-6-phosphate isomerase from Shewanella oneidensis (strain ATCC 700550 / JCM 31522 / CIP 106686 / LMG 19005 / NCIMB 14063 / MR-1).